The sequence spans 284 residues: MSYYTNEQSGGEKKTRKSSSSKRSDRKDSASSSPPPPGAVRGRVMYPPGYDGDAWLSRRERRESSGSSDSSSSSRDDDDRRQPEQQPKAQSTRERRKSQTTVTTRRKTDRGDGGKSSNSNGPWSIDNQCANLVKRLSLAKGFGPSATPASDSDRWRTTTNPANRSAFVQAVSVTAMAQGELAARAAWEKYKPRNNEDLEKLVETLEIKITVNPGRGLWDVASNIASAIRNGQPITHDLLYASSPAGDGARTSRRQSCRSKSMPRGDEEDERDAGSPRPPSSRRR.

2 disordered regions span residues 1 to 126 and 239 to 284; these read MSYY…WSID and LYAS…SRRR. Residues 74–83 are compositionally biased toward basic and acidic residues; it reads SRDDDDRRQP. Residues 94–108 show a composition bias toward basic residues; that stretch reads ERRKSQTTVTTRRKT. The span at 115 to 126 shows a compositional bias: polar residues; that stretch reads KSSNSNGPWSID.

The protein belongs to the alphaherpesvirinae VP22 tegument protein family. As to quaternary structure, interacts with gE (via C-terminus); this interaction is necessary for the recruitment of VP22 to the Golgi and its packaging into virions. Interacts with gM (via C-terminus). Interacts with VP16; this interaction allows the formation of a tripartite complex composed of VP16, VP22 and UL41/VHS. Interacts with the capsid-binding protein UL16. Interacts with host CGAS. Post-translationally, highly phosphorylated in the host cell. Packaging is selective for underphosphorylated forms.

The protein resides in the virion tegument. Its subcellular location is the host cytoplasm. It localises to the host nucleus. It is found in the host Golgi apparatus. Tegument protein that plays different roles during the time course of infection. Participates in both the accumulation of viral mRNAs and viral protein translation at late time of infection. Modulates the RNase activity of the virion host shutoff protein UL41 probably to ensure necessary levels of key cellular mRNAs and proteins. Plays a role in microtubule reorganization that occurs after viral infection by stabilizing microtubule network. Plays a role in the inhibition of host innate immune system by targeting the CGAS enzymatic activity which is the principal cytosolic DNA sensor that detects invading viral DNA. Acts by mediating disruption of liquid-like droplets in which CGAS is activated, thereby preventing CGAS activity. This Amazona oratrix (yellow-headed parrot) protein is Tegument protein VP22 (UL49).